A 320-amino-acid polypeptide reads, in one-letter code: Beta-ketoacyl-[acyl-carrier-protein] synthase III (320 aa).

Catalysis depends on residues C113 and H247. The segment at 248 to 252 (QANRR) is ACP-binding. N277 is a catalytic residue.

It belongs to the thiolase-like superfamily. FabH family. As to quaternary structure, homodimer.

The protein resides in the cytoplasm. The catalysed reaction is malonyl-[ACP] + acetyl-CoA + H(+) = 3-oxobutanoyl-[ACP] + CO2 + CoA. The protein operates within lipid metabolism; fatty acid biosynthesis. In terms of biological role, catalyzes the condensation reaction of fatty acid synthesis by the addition to an acyl acceptor of two carbons from malonyl-ACP. Catalyzes the first condensation reaction which initiates fatty acid synthesis and may therefore play a role in governing the total rate of fatty acid production. Possesses both acetoacetyl-ACP synthase and acetyl transacylase activities. Its substrate specificity determines the biosynthesis of branched-chain and/or straight-chain of fatty acids. This is Beta-ketoacyl-[acyl-carrier-protein] synthase III from Acidiphilium cryptum (strain JF-5).